Reading from the N-terminus, the 187-residue chain is MTDSSNEHETENPSLPIPDNEIQDLQQEIATLKAELKEKNDKYLMVLAESENARKRMQKERQEMMQYAVENALIDFLVPIESMEKALGFASQMSDEVKNWALGFNMILQQFKQVFEEKGIVEYSSVGQKFNPFLHEAVETEETTKVPEGTIVEEFSKGYKIGERPIRVAKVKVAKAPAPQEKEEVEK.

The span at 1-11 (MTDSSNEHETE) shows a compositional bias: basic and acidic residues. The tract at residues 1-21 (MTDSSNEHETENPSLPIPDNE) is disordered.

This sequence belongs to the GrpE family. As to quaternary structure, homodimer.

The protein localises to the cytoplasm. In terms of biological role, participates actively in the response to hyperosmotic and heat shock by preventing the aggregation of stress-denatured proteins, in association with DnaK and GrpE. It is the nucleotide exchange factor for DnaK and may function as a thermosensor. Unfolded proteins bind initially to DnaJ; upon interaction with the DnaJ-bound protein, DnaK hydrolyzes its bound ATP, resulting in the formation of a stable complex. GrpE releases ADP from DnaK; ATP binding to DnaK triggers the release of the substrate protein, thus completing the reaction cycle. Several rounds of ATP-dependent interactions between DnaJ, DnaK and GrpE are required for fully efficient folding. This is Protein GrpE from Chlamydia caviae (strain ATCC VR-813 / DSM 19441 / 03DC25 / GPIC) (Chlamydophila caviae).